Here is a 1225-residue protein sequence, read N- to C-terminus: uncharacterized protein (1225 aa).

The segment covering 1–15 (MSSQAEPSKGASNAD) has biased composition (polar residues). Residues 1 to 104 (MSSQAEPSKG…VDGVPTRPVS (104 aa)) form a disordered region. A compositionally biased stretch (basic and acidic residues) spans 16 to 25 (PNEKVEKMHL). Residues 43–65 (ASPSDKNNLNPQSAGVSEVQVQD) are compositionally biased toward polar residues. The chain crosses the membrane as a helical span at residues 167 to 187 (FLFGYLRFGFLSLFIIMAVCI). Residues 217-422 (DSETVTWLNT…SPNVYELDIE (206 aa)) enclose the SMP-LTD domain. C2 domains are found at residues 413–534 (SPNV…NDAF), 559–668 (DSGE…LLWF), and 685–803 (KPAQ…GALM). Residue Ser843 is modified to Phosphoserine. Residues 867–890 (PESQKTPTAVDNTSTSRGSTSVKT) are disordered. The segment covering 869-890 (SQKTPTAVDNTSTSRGSTSVKT) has biased composition (polar residues). Positions 1019–1137 (RLTPVPVKLE…QQQQQTNYEI (119 aa)) constitute a C2 4 domain. 5 residues coordinate Ca(2+): Asp1053, Asp1059, Asp1107, Asp1109, and Asp1115.

Ca(2+) is required as a cofactor.

The protein resides in the endoplasmic reticulum membrane. This is an uncharacterized protein from Schizosaccharomyces pombe (strain 972 / ATCC 24843) (Fission yeast).